The sequence spans 122 residues: MQMAHIGTDIIEIARIRKAIETHNQRMLNKIFTKKEQEYCLRLTNPYPSFAARFAGKEAVAKALGTGIGKVIGWKDIEILTSPKQPKVHLPPRVYKELGISKVLLSISHSREYATAMAVALV.

Residues Asp-9 and Glu-58 each contribute to the Mg(2+) site.

The protein belongs to the P-Pant transferase superfamily. AcpS family. The cofactor is Mg(2+).

The protein resides in the cytoplasm. It carries out the reaction apo-[ACP] + CoA = holo-[ACP] + adenosine 3',5'-bisphosphate + H(+). Transfers the 4'-phosphopantetheine moiety from coenzyme A to a Ser of acyl-carrier-protein. The chain is Holo-[acyl-carrier-protein] synthase from Chlamydia felis (strain Fe/C-56) (Chlamydophila felis).